Here is a 163-residue protein sequence, read N- to C-terminus: 3-hydroxyacyl-[acyl-carrier-protein] dehydratase FabZ (163 aa).

Residue histidine 58 is part of the active site.

This sequence belongs to the thioester dehydratase family. FabZ subfamily.

It localises to the cytoplasm. The enzyme catalyses a (3R)-hydroxyacyl-[ACP] = a (2E)-enoyl-[ACP] + H2O. Its function is as follows. Involved in unsaturated fatty acids biosynthesis. Catalyzes the dehydration of short chain beta-hydroxyacyl-ACPs and long chain saturated and unsaturated beta-hydroxyacyl-ACPs. In Francisella philomiragia subsp. philomiragia (strain ATCC 25017 / CCUG 19701 / FSC 153 / O#319-036), this protein is 3-hydroxyacyl-[acyl-carrier-protein] dehydratase FabZ.